An 86-amino-acid polypeptide reads, in one-letter code: Large ribosomal subunit protein eL43 (86 aa).

A C4-type zinc finger spans residues 38 to 59 (CPVCGRKAVRRISTGIWQCQKC).

It belongs to the eukaryotic ribosomal protein eL43 family. Zn(2+) serves as cofactor.

The chain is Large ribosomal subunit protein eL43 from Thermococcus onnurineus (strain NA1).